Reading from the N-terminus, the 428-residue chain is Chaperone SurA (428 aa).

An N-terminal signal peptide occupies residues 1 to 20 (MKNWKTLLLGIAMIANTSFA). PpiC domains follow at residues 171 to 272 (STEL…KVND) and 282 to 382 (VTEV…ELLD).

Its subcellular location is the periplasm. It carries out the reaction [protein]-peptidylproline (omega=180) = [protein]-peptidylproline (omega=0). Chaperone involved in the correct folding and assembly of outer membrane proteins. Recognizes specific patterns of aromatic residues and the orientation of their side chains, which are found more frequently in integral outer membrane proteins. May act in both early periplasmic and late outer membrane-associated steps of protein maturation. The chain is Chaperone SurA from Salmonella paratyphi A (strain ATCC 9150 / SARB42).